The following is a 458-amino-acid chain: Argininosuccinate lyase (458 aa).

This sequence belongs to the lyase 1 family. Argininosuccinate lyase subfamily.

The protein resides in the cytoplasm. The catalysed reaction is 2-(N(omega)-L-arginino)succinate = fumarate + L-arginine. It participates in amino-acid biosynthesis; L-arginine biosynthesis; L-arginine from L-ornithine and carbamoyl phosphate: step 3/3. In Neisseria meningitidis serogroup C (strain 053442), this protein is Argininosuccinate lyase.